The primary structure comprises 298 residues: Quinolinate synthase (298 aa).

The iminosuccinate site is built by His-19 and Ser-36. Residue Cys-81 participates in [4Fe-4S] cluster binding. Residues 107-109 (YVN) and Ser-124 each bind iminosuccinate. Residue Cys-168 participates in [4Fe-4S] cluster binding. Iminosuccinate-binding positions include 193-195 (HPE) and Thr-210. [4Fe-4S] cluster is bound at residue Cys-254.

The protein belongs to the quinolinate synthase family. Type 2 subfamily. Requires [4Fe-4S] cluster as cofactor.

The protein resides in the cytoplasm. It catalyses the reaction iminosuccinate + dihydroxyacetone phosphate = quinolinate + phosphate + 2 H2O + H(+). It functions in the pathway cofactor biosynthesis; NAD(+) biosynthesis; quinolinate from iminoaspartate: step 1/1. Functionally, catalyzes the condensation of iminoaspartate with dihydroxyacetone phosphate to form quinolinate. This chain is Quinolinate synthase, found in Thermotoga petrophila (strain ATCC BAA-488 / DSM 13995 / JCM 10881 / RKU-1).